The following is a 545-amino-acid chain: MTTNYIFVTGGVVSSLGKGIAAASLAAILEARGLNVTIMKLDPYINVDPGTMSPIQHGEVFVTEDGAETDLDLGHYERFIRTKMSRRNNFTTGRIYSDVLRKERRGDYLGATVQVIPHITNAIKERVLEGGEGHDVVLVEIGGTVGDIESLPFLEAIRQMAVEIGREHTLFMHLTLVPYMAAAGEVKTKPTQHSVKELLSIGIQPDILICRSDRAVPANERAKIALFCNVPEKAVISLKDVDSIYKIPGLLKSQGLDDYICKRFSLNCPEANLSEWEQVIYEEANPAGEVTIGMVGKYIELPDAYKSVIEALKHGGLKNRVTVNIKLIDSQDVETRGVEILKDLDAILIPGGFGYRGVEGKIATARYARENNIPYLGICLGMQVALIEFARNVAGMDNANSTEFVPDCKYPVVALITEWRDEDGNVEVRSEKSDLGGTMRLGAQQCQLNDDSLVRQLYGAPTIVERHRHRYEVNNMLLKQIEAAGLRVAGRSGDDQLVEIIEVPNHPWFVACQFHPEFTSTPRDGHPLFAGFVKAASEHQKRQAK.

The segment at 1–266 is amidoligase domain; the sequence is MTTNYIFVTG…DDYICKRFSL (266 aa). Serine 14 is a CTP binding site. A UTP-binding site is contributed by serine 14. Residues 15–20 and aspartate 72 contribute to the ATP site; that span reads SLGKGI. 2 residues coordinate Mg(2+): aspartate 72 and glutamate 140. Residues 147–149, 187–192, and lysine 223 each bind CTP; these read DIE and KTKPTQ. Residues 187–192 and lysine 223 contribute to the UTP site; that span reads KTKPTQ. 239–241 serves as a coordination point for ATP; the sequence is KDV. Residues 291–542 form the Glutamine amidotransferase type-1 domain; that stretch reads TIGMVGKYIE…VKAASEHQKR (252 aa). Residue glycine 352 coordinates L-glutamine. Cysteine 379 functions as the Nucleophile; for glutamine hydrolysis in the catalytic mechanism. Residues 380–383, glutamate 403, and arginine 470 each bind L-glutamine; that span reads LGMQ. Active-site residues include histidine 515 and glutamate 517.

This sequence belongs to the CTP synthase family. As to quaternary structure, homotetramer.

It carries out the reaction UTP + L-glutamine + ATP + H2O = CTP + L-glutamate + ADP + phosphate + 2 H(+). The enzyme catalyses L-glutamine + H2O = L-glutamate + NH4(+). The catalysed reaction is UTP + NH4(+) + ATP = CTP + ADP + phosphate + 2 H(+). It functions in the pathway pyrimidine metabolism; CTP biosynthesis via de novo pathway; CTP from UDP: step 2/2. Its activity is regulated as follows. Allosterically activated by GTP, when glutamine is the substrate; GTP has no effect on the reaction when ammonia is the substrate. The allosteric effector GTP functions by stabilizing the protein conformation that binds the tetrahedral intermediate(s) formed during glutamine hydrolysis. Inhibited by the product CTP, via allosteric rather than competitive inhibition. Its function is as follows. Catalyzes the ATP-dependent amination of UTP to CTP with either L-glutamine or ammonia as the source of nitrogen. Regulates intracellular CTP levels through interactions with the four ribonucleotide triphosphates. This Salmonella arizonae (strain ATCC BAA-731 / CDC346-86 / RSK2980) protein is CTP synthase.